We begin with the raw amino-acid sequence, 1227 residues long: Anion exchange protein 3 (1227 aa).

Positions 1–11 (MANGVIPPPGG) are enriched in pro residues. 3 disordered regions span residues 1–256 (MANG…DEAE), 286–312 (KPSR…KKKK), and 428–497 (NDDK…GDGH). The Cytoplasmic portion of the chain corresponds to 1–707 (MANGVIPPPG…DLRDALHSQC (707 aa)). A compositionally biased stretch (basic and acidic residues) spans 58–75 (DPEKPSRSYSERDFEFHR). Composition is skewed to basic residues over residues 76–97 (HTSH…KLRR) and 104–113 (RHTRRKRKKE). Over residues 134–152 (AEEEEEEEEEEEGESEAEP) the composition is skewed to acidic residues. Residues Ser167, Ser170, Ser175, and Ser198 each carry the phosphoserine modification. The segment covering 194-215 (QSDQSPQRSGSSPSPRARASRI) has biased composition (low complexity). Arg294 is subject to Omega-N-methylarginine. The span at 435-448 (FFPRNPSSSSVNSV) shows a compositional bias: low complexity. Basic and acidic residues predominate over residues 480–497 (HDPDAKEKPLHMPGGDGH). 4 consecutive transmembrane segments (helical) span residues 708–730 (VAAV…GLLG), 736–773 (LMGV…LLVF), 793–815 (VWVG…SFLV), and 825–846 (IFAF…YKVF). Residues 708–1227 (VAAVLFIYFA…DEYNELHMPV (520 aa)) form a membrane (anion exchange) region. Asn868 carries an N-linked (GlcNAc...) asparagine glycan. The helical transmembrane segment at 888–905 (ALLSLILMLGTFLIAFFL) threads the bilayer. At 906–920 (RKFRNSRFLGGKARR) the chain is on the cytoplasmic side. The next 5 helical transmembrane spans lie at 921–941 (IIGD…DYSI), 975–997 (PFPP…LIFM), 1023–1044 (LLLI…LTAA), 1078–1123 (VTGV…IQLS), and 1150–1186 (MHLF…TVPL). Residue Cys1160 is the site of S-palmitoyl cysteine attachment.

The protein belongs to the anion exchanger (TC 2.A.31) family. As to expression, expressed in the brain.

The protein localises to the cell membrane. The enzyme catalyses hydrogencarbonate(in) + chloride(out) = hydrogencarbonate(out) + chloride(in). Its activity is regulated as follows. Inhibited by 4,4'-diisothiocyanatostilbene-2,2'-disulfonic acid (DIDS). Sodium-independent anion exchanger which mediates the electroneutral exchange of chloride for bicarbonate ions across the cell membrane. May be involved in the regulation of intracellular pH, and the modulation of cardiac action potential. The polypeptide is Anion exchange protein 3 (Slc4a3) (Mus musculus (Mouse)).